Here is a 661-residue protein sequence, read N- to C-terminus: Heme transporter BhuA (661 aa).

Positions 1–23 (MKFTRTLVLASTFLLATVATSQA) are cleaved as a signal peptide. Residues 48-159 (KDNIEATGGT…AAGAIRYETV (112 aa)) form the TBDR plug domain. The TBDR beta-barrel domain occupies 170–661 (TFGARIIGSY…TFTFQTAFKF (492 aa)).

Belongs to the TonB-dependent receptor family.

It localises to the cell outer membrane. Heme transporter. The chain is Heme transporter BhuA (bhuA) from Brucella suis biovar 1 (strain 1330).